The chain runs to 879 residues: Phosphoenolpyruvate carboxylase (879 aa).

Catalysis depends on residues histidine 138 and lysine 545.

The protein belongs to the PEPCase type 1 family. The cofactor is Mg(2+).

It catalyses the reaction oxaloacetate + phosphate = phosphoenolpyruvate + hydrogencarbonate. Forms oxaloacetate, a four-carbon dicarboxylic acid source for the tricarboxylic acid cycle. This is Phosphoenolpyruvate carboxylase from Histophilus somni (strain 2336) (Haemophilus somnus).